The following is a 103-amino-acid chain: UPF0145 protein BCE_1095 (103 aa).

It belongs to the UPF0145 family.

This Bacillus cereus (strain ATCC 10987 / NRS 248) protein is UPF0145 protein BCE_1095.